Consider the following 241-residue polypeptide: Probable pectate lyase D (241 aa).

The signal sequence occupies residues 1 to 17 (MYQKSLLFSLLATSALA). Asn-215 is a glycosylation site (N-linked (GlcNAc...) asparagine). Residues 215–241 (NNSGDEPEEVSEGPSDACQYSEPLSSC) form a disordered region.

It belongs to the polysaccharide lyase 3 family. Requires Ca(2+) as cofactor.

Its subcellular location is the secreted. It catalyses the reaction Eliminative cleavage of (1-&gt;4)-alpha-D-galacturonan to give oligosaccharides with 4-deoxy-alpha-D-galact-4-enuronosyl groups at their non-reducing ends.. Pectinolytic enzyme consist of four classes of enzymes: pectin lyase, polygalacturonase, pectin methylesterase and rhamnogalacturonase. Among pectinolytic enzymes, pectin lyase is the most important in depolymerization of pectin, since it cleaves internal glycosidic bonds of highly methylated pectins. Favors pectate, the anion, over pectin, the methyl ester. The protein is Probable pectate lyase D (plyD) of Neosartorya fischeri (strain ATCC 1020 / DSM 3700 / CBS 544.65 / FGSC A1164 / JCM 1740 / NRRL 181 / WB 181) (Aspergillus fischerianus).